Reading from the N-terminus, the 117-residue chain is Large ribosomal subunit protein bL20 (117 aa).

Belongs to the bacterial ribosomal protein bL20 family.

In terms of biological role, binds directly to 23S ribosomal RNA and is necessary for the in vitro assembly process of the 50S ribosomal subunit. It is not involved in the protein synthesizing functions of that subunit. The chain is Large ribosomal subunit protein bL20 from Campylobacter lari (strain RM2100 / D67 / ATCC BAA-1060).